Reading from the N-terminus, the 400-residue chain is Cytochrome b (400 aa).

The helical transmembrane segment at 47-67 (LGSIAGIALVIQIITGVILAM) threads the bilayer. Heme b-binding residues include H97 and H111. The next 8 helical transmembrane spans lie at 98–118 (AVGASMFFAAVYLHIARGLYY), 131–151 (IGIIIFLTMMATAFMGYVLPW), 166–186 (FSAIPLIGKSIVTWLWGGFSV), 194–214 (FFSLHYLLPFIIVALVMLHLV), 247–267 (FVGFGVYFIIFAYFIFYEPNY), 306–326 (LGGVLLMFGSIFVLFLLPWLD), 341–361 (IAFWIFMADCLLLGYLGGQPA), and 368–388 (ISRFAACYYFFHFLVALPLIG). Residues H198 and H212 each coordinate heme b.

This sequence belongs to the cytochrome b family. As to quaternary structure, the main subunits of complex b-c1 are: cytochrome b, cytochrome c1 and the Rieske protein. Heme b is required as a cofactor.

Its subcellular location is the cell membrane. Its function is as follows. Component of the ubiquinol-cytochrome c reductase complex (complex III or cytochrome b-c1 complex), which is a respiratory chain that generates an electrochemical potential coupled to ATP synthesis. This is Cytochrome b (petB) from Rickettsia bellii (strain RML369-C).